The following is a 316-amino-acid chain: Ribosomal RNA small subunit methyltransferase H (316 aa).

Residues Ala35–His37, Asp55, Phe84, Asp105, and Gln112 each bind S-adenosyl-L-methionine.

The protein belongs to the methyltransferase superfamily. RsmH family.

It is found in the cytoplasm. It carries out the reaction cytidine(1402) in 16S rRNA + S-adenosyl-L-methionine = N(4)-methylcytidine(1402) in 16S rRNA + S-adenosyl-L-homocysteine + H(+). Functionally, specifically methylates the N4 position of cytidine in position 1402 (C1402) of 16S rRNA. This chain is Ribosomal RNA small subunit methyltransferase H, found in Streptococcus mutans serotype c (strain ATCC 700610 / UA159).